Here is a 460-residue protein sequence, read N- to C-terminus: Argininosuccinate lyase (460 aa).

The protein belongs to the lyase 1 family. Argininosuccinate lyase subfamily.

The protein resides in the cytoplasm. It catalyses the reaction 2-(N(omega)-L-arginino)succinate = fumarate + L-arginine. It participates in amino-acid biosynthesis; L-arginine biosynthesis; L-arginine from L-ornithine and carbamoyl phosphate: step 3/3. The sequence is that of Argininosuccinate lyase from Alteromonas mediterranea (strain DSM 17117 / CIP 110805 / LMG 28347 / Deep ecotype).